A 181-amino-acid polypeptide reads, in one-letter code: UPF0232 protein MAP_0004 (181 aa).

Polar residues predominate over residues 1-11; it reads MSDDQSPSPSG. Disordered stretches follow at residues 1–70 and 161–181; these read MSDD…PQPL and APSW…DTYG. Over residues 18 to 39 the composition is skewed to basic and acidic residues; that stretch reads LVRRTLEEARAAARAQGKDAGR. Over residues 40-50 the composition is skewed to low complexity; that stretch reads GRAAAPTPRRV.

It belongs to the UPF0232 family.

This is UPF0232 protein MAP_0004 from Mycolicibacterium paratuberculosis (strain ATCC BAA-968 / K-10) (Mycobacterium paratuberculosis).